The chain runs to 44 residues: Cytochrome b559 subunit beta (44 aa).

A helical membrane pass occupies residues 19 to 35 (WLAIHGLAIPTVFFLGA). Heme is bound at residue histidine 23.

It belongs to the PsbE/PsbF family. In terms of assembly, heterodimer of an alpha subunit and a beta subunit. PSII is composed of 1 copy each of membrane proteins PsbA, PsbB, PsbC, PsbD, PsbE, PsbF, PsbH, PsbI, PsbJ, PsbK, PsbL, PsbM, PsbT, PsbX, PsbY, PsbZ, Psb30/Ycf12, at least 3 peripheral proteins of the oxygen-evolving complex and a large number of cofactors. It forms dimeric complexes. Requires heme b as cofactor.

The protein resides in the plastid. Its subcellular location is the chloroplast thylakoid membrane. Functionally, this b-type cytochrome is tightly associated with the reaction center of photosystem II (PSII). PSII is a light-driven water:plastoquinone oxidoreductase that uses light energy to abstract electrons from H(2)O, generating O(2) and a proton gradient subsequently used for ATP formation. It consists of a core antenna complex that captures photons, and an electron transfer chain that converts photonic excitation into a charge separation. The polypeptide is Cytochrome b559 subunit beta (Porphyra purpurea (Red seaweed)).